Here is a 411-residue protein sequence, read N- to C-terminus: MSKRQLCILGSTGSIGCSTLDVVRLHPERFQVISLAAYTSVDVIFEQCIEFKPQQVVLVSSEHAALLTQKLNDANVSNITVLSGEQALIDIAECQNSDTVMASIVGASGLLPTLAAVNAGKRVLLANKEALVTSGAIFMAAVKASGAELLPIDSEHNAIFQCLPSQQQAEIGECQLLANGISKILLTGSGGPFRTRAIDTLESVTPSQACAHPNWDMGRKISVDSATMMNKGLEFIEAKWLFNVEAEDIQVVLHPQSTIHSMVQYKDGSVIAQMGNPDMRTPIAHALSFPERIESGVAPLDFFNTPSFEFQPVDFERYPNLELAIEACKQGQAACTALNAANEIAVAAFLDEKIKFTDIYKINETSVKKFVSQKVDNINEVIALDEQARSFAQTLLADFLQTEALSQKGNK.

Positions 12, 13, 14, 15, and 127 each coordinate NADPH. Lys128 contributes to the 1-deoxy-D-xylulose 5-phosphate binding site. Glu129 serves as a coordination point for NADPH. Residue Asp153 participates in Mn(2+) binding. Residues Ser154, Glu155, Ser189, and His212 each contribute to the 1-deoxy-D-xylulose 5-phosphate site. Glu155 provides a ligand contact to Mn(2+). NADPH is bound at residue Gly218. 1-deoxy-D-xylulose 5-phosphate-binding residues include Ser225, Asn230, Lys231, and Glu234. Glu234 contacts Mn(2+).

This sequence belongs to the DXR family. The cofactor is Mg(2+). Mn(2+) serves as cofactor.

It carries out the reaction 2-C-methyl-D-erythritol 4-phosphate + NADP(+) = 1-deoxy-D-xylulose 5-phosphate + NADPH + H(+). Its pathway is isoprenoid biosynthesis; isopentenyl diphosphate biosynthesis via DXP pathway; isopentenyl diphosphate from 1-deoxy-D-xylulose 5-phosphate: step 1/6. Functionally, catalyzes the NADPH-dependent rearrangement and reduction of 1-deoxy-D-xylulose-5-phosphate (DXP) to 2-C-methyl-D-erythritol 4-phosphate (MEP). The polypeptide is 1-deoxy-D-xylulose 5-phosphate reductoisomerase (Colwellia psychrerythraea (strain 34H / ATCC BAA-681) (Vibrio psychroerythus)).